A 329-amino-acid polypeptide reads, in one-letter code: Isopenicillin N synthase (329 aa).

Positions 87, 91, and 189 each coordinate isopenicillin N. Positions 87, 91, 189, 212, and 214 each coordinate N-[(5S)-5-amino-5-carboxypentanoyl]-L-cysteinyl-D-valine. Residues Thr-180–Ala-286 form the Fe2OG dioxygenase domain. Residues His-212, Asp-214, and His-268 each coordinate Fe(2+). Arg-277 contributes to the 2-oxoglutarate binding site. An isopenicillin N-binding site is contributed by Ser-279. Residue Ser-279 participates in N-[(5S)-5-amino-5-carboxypentanoyl]-L-cysteinyl-D-valine binding.

This sequence belongs to the iron/ascorbate-dependent oxidoreductase family. Fe cation is required as a cofactor. L-ascorbate serves as cofactor.

It catalyses the reaction N-[(5S)-5-amino-5-carboxypentanoyl]-L-cysteinyl-D-valine + O2 = isopenicillin N + 2 H2O. Its pathway is antibiotic biosynthesis; penicillin G biosynthesis; penicillin G from L-alpha-aminoadipate and L-cysteine and L-valine: step 2/3. Removes, in the presence of oxygen, 4 hydrogen atoms from delta-L-(alpha-aminoadipyl)-L-cysteinyl-D-valine (ACV) to form the azetidinone and thiazolidine rings of isopenicillin. The chain is Isopenicillin N synthase (pcbC) from Streptomyces griseus.